The sequence spans 218 residues: Thiopurine S-methyltransferase (218 aa).

S-adenosyl-L-methionine-binding residues include Trp-10, Leu-45, Glu-66, and Arg-123.

The protein belongs to the class I-like SAM-binding methyltransferase superfamily. TPMT family.

It is found in the cytoplasm. The enzyme catalyses S-adenosyl-L-methionine + a thiopurine = S-adenosyl-L-homocysteine + a thiopurine S-methylether.. This is Thiopurine S-methyltransferase from Shewanella sp. (strain MR-7).